The following is a 318-amino-acid chain: Pyrimidine-specific ribonucleoside hydrolase RihA (318 aa).

His240 is a catalytic residue.

It belongs to the IUNH family. RihA subfamily.

Hydrolyzes cytidine or uridine to ribose and cytosine or uracil, respectively. In Shewanella sp. (strain MR-7), this protein is Pyrimidine-specific ribonucleoside hydrolase RihA.